We begin with the raw amino-acid sequence, 301 residues long: Cytochrome c biogenesis protein CcsA (301 aa).

The next 8 helical transmembrane spans lie at 13–33, 39–59, 73–93, 97–117, 146–166, 209–229, 236–256, and 270–290; these read NNIT…GLIF, VFYI…IILG, LYES…YLEY, LYLI…FSTL, MLSY…LVLI, TIGF…VWAN, WSWD…AAYL, and AYLA…VNFL.

This sequence belongs to the CcmF/CycK/Ccl1/NrfE/CcsA family. In terms of assembly, may interact with Ccs1.

The protein localises to the plastid. Its subcellular location is the chloroplast thylakoid membrane. In terms of biological role, required during biogenesis of c-type cytochromes (cytochrome c6 and cytochrome f) at the step of heme attachment. The protein is Cytochrome c biogenesis protein CcsA of Guillardia theta (Cryptophyte).